The following is a 353-amino-acid chain: Methylthioribose-1-phosphate isomerase (353 aa).

Residues 48-50 (RGA), Arg-94, and Gln-201 each bind substrate. The active-site Proton donor is the Asp-242. 252–253 (NK) lines the substrate pocket.

Belongs to the eIF-2B alpha/beta/delta subunits family. MtnA subfamily.

The enzyme catalyses 5-(methylsulfanyl)-alpha-D-ribose 1-phosphate = 5-(methylsulfanyl)-D-ribulose 1-phosphate. The protein operates within amino-acid biosynthesis; L-methionine biosynthesis via salvage pathway; L-methionine from S-methyl-5-thio-alpha-D-ribose 1-phosphate: step 1/6. In terms of biological role, catalyzes the interconversion of methylthioribose-1-phosphate (MTR-1-P) into methylthioribulose-1-phosphate (MTRu-1-P). This is Methylthioribose-1-phosphate isomerase from Roseiflexus sp. (strain RS-1).